A 348-amino-acid polypeptide reads, in one-letter code: Phosphate acyltransferase (348 aa).

It belongs to the PlsX family. Homodimer. Probably interacts with PlsY.

The protein resides in the cytoplasm. The catalysed reaction is a fatty acyl-[ACP] + phosphate = an acyl phosphate + holo-[ACP]. It participates in lipid metabolism; phospholipid metabolism. Functionally, catalyzes the reversible formation of acyl-phosphate (acyl-PO(4)) from acyl-[acyl-carrier-protein] (acyl-ACP). This enzyme utilizes acyl-ACP as fatty acyl donor, but not acyl-CoA. The sequence is that of Phosphate acyltransferase from Rhizobium rhizogenes (strain K84 / ATCC BAA-868) (Agrobacterium radiobacter).